A 156-amino-acid polypeptide reads, in one-letter code: Cyanate hydratase (156 aa).

Active-site residues include R96, E99, and S122.

Belongs to the cyanase family.

The catalysed reaction is cyanate + hydrogencarbonate + 3 H(+) = NH4(+) + 2 CO2. Functionally, catalyzes the reaction of cyanate with bicarbonate to produce ammonia and carbon dioxide. The protein is Cyanate hydratase of Burkholderia ambifaria (strain MC40-6).